A 381-amino-acid polypeptide reads, in one-letter code: tRNA pseudouridine synthase D (381 aa).

The Nucleophile role is filled by Asp81. Positions Gly160 to Val335 constitute a TRUD domain.

The protein belongs to the pseudouridine synthase TruD family.

It carries out the reaction uridine(13) in tRNA = pseudouridine(13) in tRNA. Responsible for synthesis of pseudouridine from uracil-13 in transfer RNAs. In Helicobacter pylori (strain HPAG1), this protein is tRNA pseudouridine synthase D.